The primary structure comprises 113 residues: Large ribosomal subunit protein bL19 (113 aa).

Belongs to the bacterial ribosomal protein bL19 family.

This protein is located at the 30S-50S ribosomal subunit interface and may play a role in the structure and function of the aminoacyl-tRNA binding site. This chain is Large ribosomal subunit protein bL19, found in Corynebacterium jeikeium (strain K411).